Here is a 363-residue protein sequence, read N- to C-terminus: Chorismate synthase (363 aa).

Residues 44-63 (DLDRRKPGTSRHTTQRQEPD) form a disordered region. NADP(+) contacts are provided by R48 and R54. FMN is bound by residues 125 to 127 (RSS), 237 to 238 (NA), G277, 292 to 296 (KATSS), and R318.

Belongs to the chorismate synthase family. As to quaternary structure, homotetramer. FMNH2 is required as a cofactor.

It catalyses the reaction 5-O-(1-carboxyvinyl)-3-phosphoshikimate = chorismate + phosphate. Its pathway is metabolic intermediate biosynthesis; chorismate biosynthesis; chorismate from D-erythrose 4-phosphate and phosphoenolpyruvate: step 7/7. Catalyzes the anti-1,4-elimination of the C-3 phosphate and the C-6 proR hydrogen from 5-enolpyruvylshikimate-3-phosphate (EPSP) to yield chorismate, which is the branch point compound that serves as the starting substrate for the three terminal pathways of aromatic amino acid biosynthesis. This reaction introduces a second double bond into the aromatic ring system. This Pseudomonas fluorescens (strain SBW25) protein is Chorismate synthase.